A 508-amino-acid polypeptide reads, in one-letter code: MAAIGVHLGCTCACVAVYKDGRADVVANDAGDRVTPAVVGFLEKETIVGLAAKQSRVRNATNTIVKVKQILGRSYGDPHTQKHISESKCIVVEKVGKPKYEIDTGETQKFVSSEDVAKLIFSKMKETAQSALGSDVNDVVITVPFDFGESQKKALGEAATAAGFSILRMIHEPSAALLAYGIGQESPTGKSNVLVYKLGGTSLSVTVIEVNSGIYRVLATSTYDDIGGICFTEALAQHLASEFQRTYKQDIRGNARAMMKLMNSADVAKHALSTLGSSNCFVDSLYDGIDFDCNVSRARFELICSSLFNQCIDPIKKLLEQIGFKANDVNQVVLCGGSARIPKLQQLIKDLFPEVEMLSSIPPDEVIPVGAAIQAGILIGKENLSTDLDTITIECSASDILVKETDESGDNKFTVLLPSGTPLPARRQHVLQAPGHISSVCLELYESGGKSPVESKFAQIVLKDLQKKASGVHDILTVLTMKRDGSLHITCTDKDSGKSEMITVEETP.

It belongs to the heat shock protein 70 family. In terms of assembly, component of ribosome-associated complex (RAC).

Its subcellular location is the cytoplasm. It is found in the cytosol. Functionally, component of the ribosome-associated complex (RAC), a complex involved in folding or maintaining nascent polypeptides in a folding-competent state. This is Heat shock 70 kDa protein 14 (hspa14) from Xenopus tropicalis (Western clawed frog).